The following is a 295-amino-acid chain: Nucleotide-binding protein YjiE (295 aa).

Position 12 to 19 (12 to 19) interacts with ATP; that stretch reads GMSGAGKT. 63-66 serves as a coordination point for GTP; sequence DMRS.

Belongs to the RapZ-like family.

Functionally, displays ATPase and GTPase activities. This Lactococcus lactis subsp. lactis (strain IL1403) (Streptococcus lactis) protein is Nucleotide-binding protein YjiE (yjiE).